A 304-amino-acid polypeptide reads, in one-letter code: tRNA pseudouridine synthase B (304 aa).

Asp48 (nucleophile) is an active-site residue.

This sequence belongs to the pseudouridine synthase TruB family. Type 1 subfamily.

It catalyses the reaction uridine(55) in tRNA = pseudouridine(55) in tRNA. Its function is as follows. Responsible for synthesis of pseudouridine from uracil-55 in the psi GC loop of transfer RNAs. This is tRNA pseudouridine synthase B from Pseudomonas aeruginosa (strain UCBPP-PA14).